A 283-amino-acid polypeptide reads, in one-letter code: Probable replication-associated protein repA1 (283 aa).

The protein belongs to the IncFII RepA family.

This protein is essential for plasmid replication; it is involved in copy control functions. In Buchnera aphidicola subsp. Acyrthosiphon pisum (strain APS) (Acyrthosiphon pisum symbiotic bacterium), this protein is Probable replication-associated protein repA1 (repA1).